Reading from the N-terminus, the 129-residue chain is Phosphoribosyl-AMP cyclohydrolase (129 aa).

Position 78 (aspartate 78) interacts with Mg(2+). Cysteine 79 is a Zn(2+) binding site. Mg(2+) is bound by residues aspartate 80 and aspartate 82. The Zn(2+) site is built by cysteine 96 and cysteine 103.

It belongs to the PRA-CH family. As to quaternary structure, homodimer. Mg(2+) is required as a cofactor. The cofactor is Zn(2+).

It is found in the cytoplasm. It catalyses the reaction 1-(5-phospho-beta-D-ribosyl)-5'-AMP + H2O = 1-(5-phospho-beta-D-ribosyl)-5-[(5-phospho-beta-D-ribosylamino)methylideneamino]imidazole-4-carboxamide. It participates in amino-acid biosynthesis; L-histidine biosynthesis; L-histidine from 5-phospho-alpha-D-ribose 1-diphosphate: step 3/9. Functionally, catalyzes the hydrolysis of the adenine ring of phosphoribosyl-AMP. This chain is Phosphoribosyl-AMP cyclohydrolase, found in Nitrosomonas europaea (strain ATCC 19718 / CIP 103999 / KCTC 2705 / NBRC 14298).